The primary structure comprises 123 residues: Protein Wnt-7(I) (123 aa).

Residue S1 is the site of O-palmitoleoyl serine; by PORCN attachment. A disulfide bridge links C89 with C104. N90 carries an N-linked (GlcNAc...) asparagine glycan. The Microbody targeting signal motif lies at 121–123 (CKF).

This sequence belongs to the Wnt family. In terms of processing, palmitoleoylation is required for efficient binding to frizzled receptors. Depalmitoleoylation leads to Wnt signaling pathway inhibition.

The protein localises to the secreted. It is found in the extracellular space. The protein resides in the extracellular matrix. In terms of biological role, ligand for members of the frizzled family of seven transmembrane receptors. Probable developmental protein. May be a signaling molecule which affects the development of discrete regions of tissues. Is likely to signal over only few cell diameters. The sequence is that of Protein Wnt-7(I) (WNT-7(I)) from Eptatretus stoutii (Pacific hagfish).